A 324-amino-acid polypeptide reads, in one-letter code: Beta-ketoacyl-[acyl-carrier-protein] synthase III (324 aa).

Residues Cys-114 and His-246 contribute to the active site. The segment at 247–251 (QANLR) is ACP-binding. Residue Asn-276 is part of the active site.

It belongs to the thiolase-like superfamily. FabH family. As to quaternary structure, homodimer.

It localises to the cytoplasm. The catalysed reaction is malonyl-[ACP] + acetyl-CoA + H(+) = 3-oxobutanoyl-[ACP] + CO2 + CoA. The protein operates within lipid metabolism; fatty acid biosynthesis. Catalyzes the condensation reaction of fatty acid synthesis by the addition to an acyl acceptor of two carbons from malonyl-ACP. Catalyzes the first condensation reaction which initiates fatty acid synthesis and may therefore play a role in governing the total rate of fatty acid production. Possesses both acetoacetyl-ACP synthase and acetyl transacylase activities. Its substrate specificity determines the biosynthesis of branched-chain and/or straight-chain of fatty acids. In Campylobacter jejuni (strain RM1221), this protein is Beta-ketoacyl-[acyl-carrier-protein] synthase III.